A 462-amino-acid chain; its full sequence is uncharacterized protein (462 aa).

The 69-residue stretch at 22–90 (KPIYKALAGQ…VGSGTFVSYD (69 aa)) folds into the HTH gntR-type domain. The segment at residues 50-69 (QRELADYLDLNVSTISKAFK) is a DNA-binding region (H-T-H motif). Lysine 308 carries the post-translational modification N6-(pyridoxal phosphate)lysine.

It in the C-terminal section; belongs to the class-I pyridoxal-phosphate-dependent aminotransferase family. Requires pyridoxal 5'-phosphate as cofactor.

This is an uncharacterized protein from Bacillus subtilis (strain 168).